The chain runs to 211 residues: Large ribosomal subunit protein uL4 (211 aa).

The interval 50-77 (STLTKGEVSGGGKKPYKQKHTGKARQGS) is disordered. Over residues 63–72 (KPYKQKHTGK) the composition is skewed to basic residues.

The protein belongs to the universal ribosomal protein uL4 family. Part of the 50S ribosomal subunit.

One of the primary rRNA binding proteins, this protein initially binds near the 5'-end of the 23S rRNA. It is important during the early stages of 50S assembly. It makes multiple contacts with different domains of the 23S rRNA in the assembled 50S subunit and ribosome. Functionally, forms part of the polypeptide exit tunnel. The protein is Large ribosomal subunit protein uL4 of Mycoplasma genitalium (strain ATCC 33530 / DSM 19775 / NCTC 10195 / G37) (Mycoplasmoides genitalium).